Reading from the N-terminus, the 666-residue chain is Chaperone protein HtpG (666 aa).

Residues 1-374 form an a; substrate-binding region; sequence MSELNPVDNQ…SADLPLNVSR (374 aa). Residues 375-593 are b; the sequence is ELLQESRDVK…EGELSPQMIQ (219 aa). Positions 594 to 666 are c; sequence MLKQMGQDVP…LRRVNELLMR (73 aa).

The protein belongs to the heat shock protein 90 family. As to quaternary structure, homodimer.

The protein resides in the cytoplasm. Molecular chaperone. Has ATPase activity. The chain is Chaperone protein HtpG from Psychrobacter cryohalolentis (strain ATCC BAA-1226 / DSM 17306 / VKM B-2378 / K5).